We begin with the raw amino-acid sequence, 156 residues long: Transcription elongation factor GreA (156 aa).

It belongs to the GreA/GreB family.

In terms of biological role, necessary for efficient RNA polymerase transcription elongation past template-encoded arresting sites. The arresting sites in DNA have the property of trapping a certain fraction of elongating RNA polymerases that pass through, resulting in locked ternary complexes. Cleavage of the nascent transcript by cleavage factors such as GreA or GreB allows the resumption of elongation from the new 3'terminus. GreA releases sequences of 2 to 3 nucleotides. This Thermomicrobium roseum (strain ATCC 27502 / DSM 5159 / P-2) protein is Transcription elongation factor GreA.